Reading from the N-terminus, the 536-residue chain is Protein ST7 homolog (536 aa).

A run of 2 helical transmembrane segments spans residues 3–23 and 49–69; these read CSWT…LFFL and FYVA…IFEW. A coiled-coil region spans residues 192–219; it reads AEEDTETVAQAENVLRRALRAIENTLST. The chain crosses the membrane as a helical span at residues 464 to 484; that stretch reads STLGMLIQTFACLAICILAVL.

The protein belongs to the ST7 family.

The protein localises to the membrane. In Caenorhabditis briggsae, this protein is Protein ST7 homolog.